We begin with the raw amino-acid sequence, 443 residues long: tRNA modification GTPase MnmE (443 aa).

Residues Arg23, Glu82, and Lys121 each coordinate (6S)-5-formyl-5,6,7,8-tetrahydrofolate. Residues 215–364 (GTSIVLAGHP…LKQFIQKWIQ (150 aa)) enclose the TrmE-type G domain. Asn225 contributes to the K(+) binding site. Residues 225 to 230 (NAGKSS), 244 to 250 (TDIPGTT), and 269 to 272 (DSAG) contribute to the GTP site. Mg(2+) is bound at residue Ser229. Positions 244, 246, and 249 each coordinate K(+). Thr250 is a binding site for Mg(2+). Lys443 contributes to the (6S)-5-formyl-5,6,7,8-tetrahydrofolate binding site.

It belongs to the TRAFAC class TrmE-Era-EngA-EngB-Septin-like GTPase superfamily. TrmE GTPase family. Homodimer. Heterotetramer of two MnmE and two MnmG subunits. It depends on K(+) as a cofactor.

Its subcellular location is the cytoplasm. Functionally, exhibits a very high intrinsic GTPase hydrolysis rate. Involved in the addition of a carboxymethylaminomethyl (cmnm) group at the wobble position (U34) of certain tRNAs, forming tRNA-cmnm(5)s(2)U34. The sequence is that of tRNA modification GTPase MnmE from Chlamydia felis (strain Fe/C-56) (Chlamydophila felis).